The primary structure comprises 413 residues: Serine/threonine transporter SstT (413 aa).

10 helical membrane-spanning segments follow: residues 18 to 38, 52 to 72, 86 to 106, 119 to 139, 145 to 165, 196 to 216, 221 to 241, 292 to 312, 320 to 340, and 360 to 380; these read LSLV…ALFA, FVSA…MASI, ILFL…IASM, IAVS…LSVV, ALMN…GVAI, LGIF…ALIG, LAVL…LIVF, VSIP…ITVL, LGIA…AICA, and LFGI…IIGV.

This sequence belongs to the dicarboxylate/amino acid:cation symporter (DAACS) (TC 2.A.23) family.

It localises to the cell inner membrane. The enzyme catalyses L-serine(in) + Na(+)(in) = L-serine(out) + Na(+)(out). It catalyses the reaction L-threonine(in) + Na(+)(in) = L-threonine(out) + Na(+)(out). Functionally, involved in the import of serine and threonine into the cell, with the concomitant import of sodium (symport system). The polypeptide is Serine/threonine transporter SstT (Pseudomonas fluorescens (strain Pf0-1)).